Consider the following 456-residue polypeptide: Nitrogenase molybdenum-iron protein beta chain (456 aa).

[8Fe-7S] cluster is bound by residues Cys-23, Cys-48, Cys-106, and Ser-141.

This sequence belongs to the NifD/NifK/NifE/NifN family. In terms of assembly, tetramer of two alpha and two beta chains. Forms complex with the iron protein (nitrogenase component 2). [8Fe-7S] cluster serves as cofactor.

The enzyme catalyses N2 + 8 reduced [2Fe-2S]-[ferredoxin] + 16 ATP + 16 H2O = H2 + 8 oxidized [2Fe-2S]-[ferredoxin] + 2 NH4(+) + 16 ADP + 16 phosphate + 6 H(+). Its function is as follows. This molybdenum-iron protein is part of the nitrogenase complex that catalyzes the key enzymatic reactions in nitrogen fixation. In Methanosarcina barkeri, this protein is Nitrogenase molybdenum-iron protein beta chain (nifK2).